A 353-amino-acid chain; its full sequence is Protein-arginine kinase (353 aa).

The Phosphagen kinase C-terminal domain occupies Ile24 to Ala256. ATP contacts are provided by residues Ser27–Arg31, His93, Arg127, Arg178–Met182, and Arg209–Glu214. Residues Arg339–Ala344 carry the RDXXRA motif of the pArg binding pocket involved in allosteric regulation motif.

The protein belongs to the ATP:guanido phosphotransferase family.

It catalyses the reaction L-arginyl-[protein] + ATP = N(omega)-phospho-L-arginyl-[protein] + ADP + H(+). With respect to regulation, appears to be allosterically activated by the binding of pArg-containing polypeptides to the pArg-binding pocket localized in the C-terminal domain of McsB. Catalyzes the specific phosphorylation of arginine residues in proteins. The chain is Protein-arginine kinase from Symbiobacterium thermophilum (strain DSM 24528 / JCM 14929 / IAM 14863 / T).